Consider the following 539-residue polypeptide: Interleukin-2 receptor subunit beta (539 aa).

A signal peptide spans 1 to 26; it reads MATIALPWSLSLYVFLLLLATPWASA. Topologically, residues 27–240 are extracellular; that stretch reads AVKNCSHLEC…RTRPADPMKE (214 aa). N-linked (GlcNAc...) asparagine glycosylation is found at N30, N43, N55, and N71. A disulfide bridge links C36 with C46. A disulfide bridge links C74 with C86. Residues 135 to 235 enclose the Fibronectin type-III domain; it reads APHSLQVLHI…QPLTFRTRPA (101 aa). 2 N-linked (GlcNAc...) asparagine glycosylation sites follow: N150 and N216. A WSXWS motif motif is present at residues 221–225; sequence WSPWS. Residues 241–268 form a helical membrane-spanning segment; sequence ILPMSWLRYLLLVLGCFSGFFSCVYILV. The Cytoplasmic segment spans residues 269-539; sequence KCRYLGPWLK…LQAQDSVHLI (271 aa). Residues 281–289 carry the Box 1 motif motif; it reads LKCHIPDPS. 3 disordered regions span residues 395 to 419, 440 to 465, and 477 to 516; these read VEEDGSRLPEGSPHPPLLPLAGEQD, PNTAYGGSRAPEERSPLSLHEGLPSL, and LERMPEGDGEGLSANSSGEQASVPEGNLHGQDQDRGQGPI.

Belongs to the type I cytokine receptor family. Type 4 subfamily. As to quaternary structure, non-covalent dimer of an alpha and a beta subunit. IL2R exists in 3 different forms: a high affinity dimer, an intermediate affinity monomer (beta subunit), and a low affinity monomer (alpha subunit). The high and intermediate affinity forms also associate with a gamma subunit. Interacts with SHB upon interleukin stimulation.

It localises to the cell membrane. The protein resides in the cell surface. Its function is as follows. Receptor for interleukin-2. This beta subunit is involved in receptor mediated endocytosis and transduces the mitogenic signals of IL2. Probably in association with IL15RA, involved in the stimulation of neutrophil phagocytosis by IL15. The chain is Interleukin-2 receptor subunit beta (Il2rb) from Mus musculus (Mouse).